Consider the following 662-residue polypeptide: High affinity sulfate transporter 2 (662 aa).

The disordered stretch occupies residues 1–35; that stretch reads MSQRVSDQAMAEVIAETRTNSSSRRHGGGDDTPSL. 12 consecutive transmembrane segments (helical) span residues 103 to 123, 128 to 148, 153 to 173, 182 to 202, 205 to 225, 264 to 284, 291 to 311, 346 to 366, 383 to 403, 420 to 440, 447 to 467, and 481 to 501; these read GDFI…LAYA, LDPW…AFMG, IAIG…SNEI, LRLA…LGVC, GFLI…GAAI, WETI…KYIA, FWVS…FVYI, AGVR…MAIG, MVAM…VTTG, VSNI…TPLF, VLAS…AMVL, and GAFF…AVAI. In terms of domain architecture, STAS spans 532–655; the sequence is QYPKAEQIPG…LTVADAVATY (124 aa).

Belongs to the SLC26A/SulP transporter (TC 2.A.53) family.

It localises to the membrane. Its function is as follows. High-affinity H(+)/sulfate cotransporter that mediates the uptake of sulfate by plant roots from low concentrations of sulfate in the soil solution. The chain is High affinity sulfate transporter 2 (ST2) from Stylosanthes hamata (Caribbean stylo).